A 905-amino-acid polypeptide reads, in one-letter code: Lateral signaling target protein 2 homolog (905 aa).

K87 is covalently cross-linked (Glycyl lysine isopeptide (Lys-Gly) (interchain with G-Cter in ubiquitin)). Position 334 is a phosphoserine (S334). Positions 354–441 are disordered; that stretch reads DEMSSLLSPP…RGQDGQSGEV (88 aa). Polar residues-rich tracts occupy residues 358-367 and 418-437; these read SLLSPPSACQ and PGNT…QDGQ. Position 512 is a phosphothreonine (T512). Disordered regions lie at residues 516-552 and 589-691; these read NPKS…DNSH and PGSV…RGDV. Composition is skewed to basic and acidic residues over residues 542–552 and 605–615; these read PRAEGTGDNSH and GGDKEPERIDE. The span at 647–656 shows a compositional bias: polar residues; the sequence is SGPQVDTASR. A compositionally biased stretch (basic and acidic residues) spans 659 to 678; that stretch reads GEGEVKGQPEPEARKQDPEK. The FYVE-type zinc finger occupies 835 to 895; that stretch reads DEACGFCTSC…VCTHCYMFHV (61 aa). Residues C841, C844, C857, C860, C865, C868, and C887 each contribute to the Zn(2+) site. At T888 the chain carries Phosphothreonine; by MAP2K. Residue C890 participates in Zn(2+) binding.

Belongs to the lst-2 family. In terms of assembly, interacts with TRIM3. Post-translationally, monoubiquitination at Lys-87 prevents binding to phosphatidylinositol 3-phosphate (PI3P) and localization to early endosome membranes. As to expression, enriched in brain (at protein level).

The protein localises to the cytoplasm. The protein resides in the cytosol. It is found in the early endosome membrane. In terms of biological role, negative regulator of epidermal growth factor receptor (EGFR) signaling. Acts by promoting EGFR degradation in endosomes when not monoubiquitinated. This chain is Lateral signaling target protein 2 homolog (Zfyve28), found in Mus musculus (Mouse).